We begin with the raw amino-acid sequence, 143 residues long: Period circadian protein (143 aa).

Residues 25 to 130 (NSKPVTAPTQ…GPSLAADNSI (106 aa)) form a disordered region. Low complexity-rich tracts occupy residues 71-93 (SGNC…ITGT) and 114-126 (GGAA…SLAA).

As to quaternary structure, forms a heterodimer with timeless (TIM); the complex then translocates into the nucleus. In terms of processing, phosphorylated with a circadian rhythmicity, probably by the double-time protein (dbt). Phosphorylation could be implicated in the stability of per monomer and in the formation of heterodimer per-tim.

It is found in the nucleus. It localises to the cytoplasm. Its subcellular location is the perinuclear region. In terms of biological role, essential for biological clock functions. Determines the period length of circadian and ultradian rhythms; an increase in PER dosage leads to shortened circadian rhythms and a decrease leads to lengthened circadian rhythms. Essential for the circadian rhythmicity of locomotor activity, eclosion behavior, and for the rhythmic component of the male courtship song that originates in the thoracic nervous system. The biological cycle depends on the rhythmic formation and nuclear localization of the TIM-PER complex. Light induces the degradation of TIM, which promotes elimination of PER. Nuclear activity of the heterodimer coordinatively regulates PER and TIM transcription through a negative feedback loop. Behaves as a negative element in circadian transcriptional loop. Does not appear to bind DNA, suggesting indirect transcriptional inhibition. This chain is Period circadian protein (per), found in Drosophila picticornis (Fruit fly).